Here is a 478-residue protein sequence, read N- to C-terminus: Putative response regulator NtrX-like (478 aa).

Residues D5 to C121 enclose the Response regulatory domain. Residue D54 is modified to 4-aspartylphosphate. A Sigma-54 factor interaction domain is found at L143–I372. ATP contacts are provided by residues G171 to E178 and A235 to E244.

Member of the two-component regulatory system RBE_0312/RBE_0470. The chain is Putative response regulator NtrX-like from Rickettsia bellii (strain RML369-C).